A 106-amino-acid chain; its full sequence is Neisseria hypothetical transcription factor (106 aa).

In terms of domain architecture, HTH cro/C1-type spans 26–80; the sequence is MRLFRVNKGWSQEELARQCGLDRTYVSAVERKRWNIALSNIEKMAAALGVAAYQL. A DNA-binding region (H-T-H motif) is located at residues 37–56; the sequence is QEELARQCGLDRTYVSAVER.

Homodimer. Can interact with the dimeric form of the DNA mimic protein DMP19 with 1:1 stoichiometry.

The protein localises to the cytoplasm. Repressor activity is inhibited in the presence of the DNA mimic protein DMP19, which interacts with NHTF and prevents binding of NHTF to its DNA-binding sites. Transcriptional regulator probably involved in the response to nitrogen levels. Down-regulates its own expression as well as the expression of the downstream gene, glnD, which encodes the [Protein-PII] uridylyltransferase, a key enzyme in the nitrogen regulation system. Acts by binding to a specific palindromic DNA sequence (5'-TGTNANTNACA-3') in its 5'-untranslated region. This is Neisseria hypothetical transcription factor from Neisseria meningitidis serogroup B (strain ATCC BAA-335 / MC58).